Here is a 190-residue protein sequence, read N- to C-terminus: Threonylcarbamoyl-AMP synthase (190 aa).

The region spanning 7-190 (RDAIAAAIDV…ALTGELFRQG (184 aa)) is the YrdC-like domain.

The protein belongs to the SUA5 family. TsaC subfamily.

It is found in the cytoplasm. The catalysed reaction is L-threonine + hydrogencarbonate + ATP = L-threonylcarbamoyladenylate + diphosphate + H2O. Functionally, required for the formation of a threonylcarbamoyl group on adenosine at position 37 (t(6)A37) in tRNAs that read codons beginning with adenine. Catalyzes the conversion of L-threonine, HCO(3)(-)/CO(2) and ATP to give threonylcarbamoyl-AMP (TC-AMP) as the acyladenylate intermediate, with the release of diphosphate. In Escherichia coli O9:H4 (strain HS), this protein is Threonylcarbamoyl-AMP synthase.